We begin with the raw amino-acid sequence, 311 residues long: Dihydroorotate dehydrogenase A (fumarate) (311 aa).

Residues Ser19 and 43–44 (KS) contribute to the FMN site. Residues Lys43, 67 to 71 (NSMGL), and Asn127 each bind substrate. An FMN-binding site is contributed by Asn127. The active-site Nucleophile is the Cys130. FMN contacts are provided by Lys164 and Val192. Residue 193–194 (NS) participates in substrate binding. FMN-binding positions include Gly221, 249–250 (GG), and 271–272 (GT).

The protein belongs to the dihydroorotate dehydrogenase family. Type 1 subfamily. In terms of assembly, homodimer. FMN is required as a cofactor.

The protein resides in the cytoplasm. It carries out the reaction (S)-dihydroorotate + fumarate = orotate + succinate. It functions in the pathway pyrimidine metabolism; UMP biosynthesis via de novo pathway. Its function is as follows. Catalyzes the conversion of dihydroorotate to orotate with fumarate as the electron acceptor. This is Dihydroorotate dehydrogenase A (fumarate) (pyrDA) from Lactococcus lactis subsp. cremoris (Streptococcus cremoris).